The following is a 100-amino-acid chain: Aspartyl/glutamyl-tRNA(Asn/Gln) amidotransferase subunit C (100 aa).

It belongs to the GatC family. As to quaternary structure, heterotrimer of A, B and C subunits.

The enzyme catalyses L-glutamyl-tRNA(Gln) + L-glutamine + ATP + H2O = L-glutaminyl-tRNA(Gln) + L-glutamate + ADP + phosphate + H(+). It carries out the reaction L-aspartyl-tRNA(Asn) + L-glutamine + ATP + H2O = L-asparaginyl-tRNA(Asn) + L-glutamate + ADP + phosphate + 2 H(+). Its function is as follows. Allows the formation of correctly charged Asn-tRNA(Asn) or Gln-tRNA(Gln) through the transamidation of misacylated Asp-tRNA(Asn) or Glu-tRNA(Gln) in organisms which lack either or both of asparaginyl-tRNA or glutaminyl-tRNA synthetases. The reaction takes place in the presence of glutamine and ATP through an activated phospho-Asp-tRNA(Asn) or phospho-Glu-tRNA(Gln). The sequence is that of Aspartyl/glutamyl-tRNA(Asn/Gln) amidotransferase subunit C from Streptococcus mutans serotype c (strain ATCC 700610 / UA159).